The primary structure comprises 367 residues: UDP-N-acetylglucosamine--N-acetylmuramyl-(pentapeptide) pyrophosphoryl-undecaprenol N-acetylglucosamine transferase (367 aa).

UDP-N-acetyl-alpha-D-glucosamine is bound by residues 21-23 (TGG), Asn129, Arg170, Ser198, and Gln295.

The protein belongs to the glycosyltransferase 28 family. MurG subfamily.

The protein resides in the cell inner membrane. The catalysed reaction is di-trans,octa-cis-undecaprenyl diphospho-N-acetyl-alpha-D-muramoyl-L-alanyl-D-glutamyl-meso-2,6-diaminopimeloyl-D-alanyl-D-alanine + UDP-N-acetyl-alpha-D-glucosamine = di-trans,octa-cis-undecaprenyl diphospho-[N-acetyl-alpha-D-glucosaminyl-(1-&gt;4)]-N-acetyl-alpha-D-muramoyl-L-alanyl-D-glutamyl-meso-2,6-diaminopimeloyl-D-alanyl-D-alanine + UDP + H(+). It participates in cell wall biogenesis; peptidoglycan biosynthesis. In terms of biological role, cell wall formation. Catalyzes the transfer of a GlcNAc subunit on undecaprenyl-pyrophosphoryl-MurNAc-pentapeptide (lipid intermediate I) to form undecaprenyl-pyrophosphoryl-MurNAc-(pentapeptide)GlcNAc (lipid intermediate II). The protein is UDP-N-acetylglucosamine--N-acetylmuramyl-(pentapeptide) pyrophosphoryl-undecaprenol N-acetylglucosamine transferase of Synechococcus sp. (strain JA-2-3B'a(2-13)) (Cyanobacteria bacterium Yellowstone B-Prime).